Consider the following 418-residue polypeptide: Queuine tRNA-ribosyltransferase accessory subunit 2 (418 aa).

Positions 325, 327, 330, and 356 each coordinate Zn(2+).

It belongs to the queuine tRNA-ribosyltransferase family. QTRT2 subfamily. Heterodimer of a catalytic subunit and an accessory subunit. Zn(2+) serves as cofactor.

Its subcellular location is the cytoplasm. Its function is as follows. Non-catalytic subunit of the queuine tRNA-ribosyltransferase (TGT) that catalyzes the base-exchange of a guanine (G) residue with queuine (Q) at position 34 (anticodon wobble position) in tRNAs with GU(N) anticodons (tRNA-Asp, -Asn, -His and -Tyr), resulting in the hypermodified nucleoside queuosine (7-(((4,5-cis-dihydroxy-2-cyclopenten-1-yl)amino)methyl)-7-deazaguanosine). This Drosophila yakuba (Fruit fly) protein is Queuine tRNA-ribosyltransferase accessory subunit 2.